Consider the following 163-residue polypeptide: Cytochrome b6-f complex subunit 4 (163 aa).

3 helical membrane-spanning segments follow: residues 36-56, 95-115, and 131-151; these read LLYI…GLAV, LLGV…PFLE, and TVFL…TLPI.

This sequence belongs to the cytochrome b family. PetD subfamily. In terms of assembly, the 4 large subunits of the cytochrome b6-f complex are cytochrome b6, subunit IV (17 kDa polypeptide, petD), cytochrome f and the Rieske protein, while the 4 small subunits are petG, petL, petM and petN. The complex functions as a dimer.

The protein resides in the plastid. It localises to the chloroplast thylakoid membrane. Component of the cytochrome b6-f complex, which mediates electron transfer between photosystem II (PSII) and photosystem I (PSI), cyclic electron flow around PSI, and state transitions. This is Cytochrome b6-f complex subunit 4 from Phalaenopsis aphrodite subsp. formosana (Moth orchid).